We begin with the raw amino-acid sequence, 490 residues long: NAD/NADP-dependent betaine aldehyde dehydrogenase (490 aa).

K(+) contacts are provided by T26, I27, and D93. Position 150-153 (150-153) interacts with NADPH; that stretch reads GAWN. K162 acts as the Charge relay system in catalysis. An NADPH-binding site is contributed by 176–179; sequence KPSE. K(+) is bound at residue V180. NADPH is bound by residues G209 and 230 to 233; that span reads GTST. L246 contributes to the K(+) binding site. The active-site Proton acceptor is E252. NADPH is bound by residues C286 and E387. C286 acts as the Nucleophile in catalysis. A Cysteine sulfenic acid (-SOH) modification is found at C286. K(+) contacts are provided by K457 and G460. The Charge relay system role is filled by E464.

The protein belongs to the aldehyde dehydrogenase family. In terms of assembly, dimer of dimers. K(+) serves as cofactor.

The catalysed reaction is betaine aldehyde + NAD(+) + H2O = glycine betaine + NADH + 2 H(+). The enzyme catalyses betaine aldehyde + NADP(+) + H2O = glycine betaine + NADPH + 2 H(+). It participates in amine and polyamine biosynthesis; betaine biosynthesis via choline pathway; betaine from betaine aldehyde: step 1/1. In terms of biological role, involved in the biosynthesis of the osmoprotectant glycine betaine. Catalyzes the irreversible oxidation of betaine aldehyde to the corresponding acid. In P.aeruginosa this reaction is a compulsory step in the assimilation of carbon and nitrogen when bacteria are growing in choline or choline precursors. Can use NADP(+) with similar efficiency to NAD(+), a property that can be used by the bacterium to produce the NADPH needed to combat the oxidative stress imposed by the host defenses. This chain is NAD/NADP-dependent betaine aldehyde dehydrogenase, found in Pseudomonas aeruginosa (strain ATCC 15692 / DSM 22644 / CIP 104116 / JCM 14847 / LMG 12228 / 1C / PRS 101 / PAO1).